Here is a 389-residue protein sequence, read N- to C-terminus: Urotensin-2 receptor (389 aa).

Polar residues-rich tracts occupy residues 1–10 (MALTPESPSS) and 28–39 (PNATLNSSWASP). Residues 1–39 (MALTPESPSSFPGLAAIGSSVPEPPGSPNATLNSSWASP) form a disordered region. Over 1–54 (MALTPESPSSFPGLAAIGSSVPEPPGSPNATLNSSWASPTEPSSLEDLVATGAI) the chain is Extracellular. N-linked (GlcNAc...) asparagine glycans are attached at residues Asn29 and Asn33. A helical transmembrane segment spans residues 55 to 77 (GTLLSAMGVVGVVGNAYTLVVTC). The Cytoplasmic segment spans residues 78-87 (RSLRAVASMY). The chain crosses the membrane as a helical span at residues 88–113 (IYVVNLALADLLYLLSIPFIVATYIT). Topologically, residues 114 to 124 (KEWHFGDVGCR) are extracellular. A disulfide bond links Cys123 and Cys199. The chain crosses the membrane as a helical span at residues 125 to 146 (VLFSLDFLTMHASIFTLTVMSS). Over 147-167 (ERYAAVLRPLDTVQRPKGYRK) the chain is Cytoplasmic. Residues 168-186 (LLALGTWLLALLLTLPVML) form a helical membrane-spanning segment. The Extracellular portion of the chain corresponds to 187 to 209 (AMRLVRRGPKSLCLPAWGPRAHR). Residues 210–232 (AYLTLLFATSIAGPGLLIGLLYA) form a helical membrane-spanning segment. The Cytoplasmic segment spans residues 233–258 (RLARAYRRSQRASFKRARRPGARALR). A helical membrane pass occupies residues 259 to 284 (LVLGIVLLFWACFLPFWLWQLLAQYR). Residues 285-297 (EAPLAPRTARIVN) lie on the Extracellular side of the membrane. A helical membrane pass occupies residues 298 to 318 (YLTTCLTYGNSCANPFLYTLL). Residues 319-389 (TRNYRDHLRG…PALESPGDPA (71 aa)) are Cytoplasmic-facing. Residues 328–366 (GRVRSPGSGGVRGPVPSLQPRARFQRGSGRSLSSCSPQP) form a disordered region. Residues 355–366 (SGRSLSSCSPQP) show a composition bias toward polar residues.

Belongs to the G-protein coupled receptor 1 family.

The protein localises to the cell membrane. In terms of biological role, high affinity receptor for urotensin-2 and urotensin-2B. The activity of this receptor is mediated by a G-protein that activate a phosphatidylinositol-calcium second messenger system. The polypeptide is Urotensin-2 receptor (UTS2R) (Macaca mulatta (Rhesus macaque)).